Consider the following 393-residue polypeptide: Dual-specificity RNA methyltransferase RlmN (393 aa).

Residue glutamate 114 is the Proton acceptor of the active site. One can recognise a Radical SAM core domain in the interval glutamate 120 to aspartate 359. Cysteine 127 and cysteine 364 form a disulfide bridge. Cysteine 134, cysteine 138, and cysteine 141 together coordinate [4Fe-4S] cluster. Residues glycine 188 to glutamate 189, serine 220, serine 242 to histidine 244, and asparagine 321 contribute to the S-adenosyl-L-methionine site. The active-site S-methylcysteine intermediate is cysteine 364.

It belongs to the radical SAM superfamily. RlmN family. The cofactor is [4Fe-4S] cluster.

It localises to the cytoplasm. The enzyme catalyses adenosine(2503) in 23S rRNA + 2 reduced [2Fe-2S]-[ferredoxin] + 2 S-adenosyl-L-methionine = 2-methyladenosine(2503) in 23S rRNA + 5'-deoxyadenosine + L-methionine + 2 oxidized [2Fe-2S]-[ferredoxin] + S-adenosyl-L-homocysteine. It catalyses the reaction adenosine(37) in tRNA + 2 reduced [2Fe-2S]-[ferredoxin] + 2 S-adenosyl-L-methionine = 2-methyladenosine(37) in tRNA + 5'-deoxyadenosine + L-methionine + 2 oxidized [2Fe-2S]-[ferredoxin] + S-adenosyl-L-homocysteine. Its function is as follows. Specifically methylates position 2 of adenine 2503 in 23S rRNA and position 2 of adenine 37 in tRNAs. m2A2503 modification seems to play a crucial role in the proofreading step occurring at the peptidyl transferase center and thus would serve to optimize ribosomal fidelity. The sequence is that of Dual-specificity RNA methyltransferase RlmN from Haemophilus ducreyi (strain 35000HP / ATCC 700724).